A 199-amino-acid chain; its full sequence is MPKPTKGPRLGGSSSHQSALLANLATSLFEHGRIKTTEPKARALRPYAEKLITHAKKGALHNRREVMKKIRDKDVVHTLFAEIGPFYADRNGGYTRIIKVENRKGDNAPMAVIELVREKTVTDEANRARRAAASQAKADERADEKADEKAEETVEETTEAPAEESTEAAAEETVEETTEAPAEESTEAAEESEAKDDTK.

Positions aspartate 123–lysine 199 are disordered. Positions lysine 137–glutamate 152 are enriched in basic and acidic residues. The span at threonine 153–lysine 199 shows a compositional bias: acidic residues.

It belongs to the bacterial ribosomal protein bL17 family. In terms of assembly, part of the 50S ribosomal subunit. Contacts protein L32.

The polypeptide is Large ribosomal subunit protein bL17 (Mycolicibacterium smegmatis (strain ATCC 700084 / mc(2)155) (Mycobacterium smegmatis)).